Reading from the N-terminus, the 437-residue chain is ATP-dependent RNA helicase SUB2 (437 aa).

A compositionally biased stretch (acidic residues) spans 1 to 19 (MSHEAEEDLLEYSDNEQEV). The tract at residues 1–45 (MSHEAEEDLLEYSDNEQEVQVDNKATEVNAEGNGESQAKDSDKKG) is disordered. The Q motif motif lies at 53–81 (TGFKDFLLKPELSRAIIDCGFEHPSEVQQ). Residues 84 to 259 (IPQSIHGTDV…RRFLQNPLEI (176 aa)) enclose the Helicase ATP-binding domain. 97–104 (AKSGLGKT) contacts ATP. The DECD box signature appears at 206–209 (DECD). Residues 287-432 (KLAQLLDDLE…EFPEEGVDPS (146 aa)) enclose the Helicase C-terminal domain.

This sequence belongs to the DEAD box helicase family. DECD subfamily.

The protein localises to the nucleus. It carries out the reaction ATP + H2O = ADP + phosphate + H(+). Its function is as follows. ATP-binding RNA helicase involved in transcription elongation and required for the export of mRNA out of the nucleus. SUB2 also plays a role in pre-mRNA splicing and spliceosome assembly. May be involved in rDNA and telomeric silencing, and maintenance of genome integrity. The sequence is that of ATP-dependent RNA helicase SUB2 (SUB2) from Kluyveromyces lactis (strain ATCC 8585 / CBS 2359 / DSM 70799 / NBRC 1267 / NRRL Y-1140 / WM37) (Yeast).